Reading from the N-terminus, the 252-residue chain is uncharacterized protein (252 aa).

The protein belongs to the methyltransferase superfamily.

This is an uncharacterized protein from Mycobacterium sp. (strain JLS).